A 243-amino-acid polypeptide reads, in one-letter code: Probable transcriptional regulatory protein Smlt3713 (243 aa).

Belongs to the TACO1 family.

It localises to the cytoplasm. The protein is Probable transcriptional regulatory protein Smlt3713 of Stenotrophomonas maltophilia (strain K279a).